The primary structure comprises 514 residues: Transcription termination factor Rho (514 aa).

A disordered region spans residues E25–K52. Basic residues predominate over residues N35–H45. One can recognise a Rho RNA-BD domain in the interval L141–D216. ATP contacts are provided by residues G259–G264, R271–M276, and R302.

This sequence belongs to the Rho family. In terms of assembly, homohexamer. The homohexamer assembles into an open ring structure.

In terms of biological role, facilitates transcription termination by a mechanism that involves Rho binding to the nascent RNA, activation of Rho's RNA-dependent ATPase activity, and release of the mRNA from the DNA template. This Rhodopirellula baltica (strain DSM 10527 / NCIMB 13988 / SH1) protein is Transcription termination factor Rho.